A 263-amino-acid polypeptide reads, in one-letter code: P29 (263 aa).

Positions 30-39 (VPEGLRDISK) are enriched in basic and acidic residues. The tract at residues 30 to 93 (VPEGLRDISK…PKQKQLAPPI (64 aa)) is disordered. A compositionally biased stretch (polar residues) spans 52 to 64 (LSRASARPQQLQP).

The chain is P29 (p29) from Citrus sinensis (Sweet orange).